The following is a 1500-amino-acid chain: Copper-transporting ATPase 1 (1500 aa).

Residues M1–S653 are Cytoplasmic-facing. HMA domains follow at residues N8–V74 and T85–G151. Positions 18, 19, and 22 each coordinate Cu(+). At T152 the chain carries Phosphothreonine. Positions V171 to F237 constitute an HMA 3 domain. 2 residues coordinate Cu(+): C182 and C185. S270 is subject to Phosphoserine. The 67-residue stretch at S277 to Y343 folds into the HMA 4 domain. The Cu(+) site is built by C288 and C291. T327 carries the post-translational modification Phosphothreonine. Phosphoserine is present on residues S339, S353, S357, and S362. HMA domains are found at residues Q377 to T443, S488 to T554, and G564 to S630. Residues C388, C391, C499, C502, C575, and C578 each coordinate Cu(+). Residues F654 to D675 traverse the membrane as a helical segment. Residues H676 to L714 are Extracellular-facing. N686 carries an N-linked (GlcNAc...) asparagine glycan. A helical membrane pass occupies residues L715–Q734. The Cytoplasmic portion of the chain corresponds to A735–H741. The chain crosses the membrane as a helical span at residues K742–L762. The Extracellular segment spans residues I763–F781. Residues D782 to K802 form a helical membrane-spanning segment. Residues G803 to K936 are Cytoplasmic-facing. A helical membrane pass occupies residues L937–I959. At G960–F989 the chain is on the extracellular side. N975 is a glycosylation site (N-linked (GlcNAc...) asparagine). A helical membrane pass occupies residues Q990 to A1011. Residues V1012–R1356 lie on the Cytoplasmic side of the membrane. The active-site 4-aspartylphosphate intermediate is D1044. Position 1081 (E1081) interacts with ATP. T1212 is modified (phosphothreonine). D1301 and D1305 together coordinate Mg(2+). A helical membrane pass occupies residues I1357 to A1374. The Extracellular segment spans residues G1375–Q1385. Residues P1386–L1405 form a helical membrane-spanning segment. The Cytoplasmic portion of the chain corresponds to F1406–L1500. Phosphoserine occurs at positions 1430, 1432, 1460, 1463, and 1466. Positions L1467 to L1468 match the Endocytosis signal motif. Phosphoserine occurs at positions 1469, 1473, 1476, and 1486. Residues S1486–L1500 are PDZD11-binding. An Endocytosis signal motif is present at residues L1487 to L1488.

It belongs to the cation transport ATPase (P-type) (TC 3.A.3) family. Type IB subfamily. In terms of assembly, monomer. Interacts with PDZD11. Interacts with ATOX1 and COMMD1. Interacts with TYRP1. Directly interacts with SOD3; this interaction is copper-dependent and is required for SOD3 activity. As to expression, widely expressed including in heart, brain, lung, muscle, kidney, pancreas, and to a lesser extent placenta. Expressed in fibroblasts, aortic smooth muscle cells, aortic endothelial cells and umbilical vein endothelial cells (at protein level). Expressed in cerebellum and brain cortex.

The protein resides in the golgi apparatus. Its subcellular location is the trans-Golgi network membrane. It is found in the cell membrane. It localises to the melanosome membrane. The protein localises to the early endosome membrane. The protein resides in the cell projection. Its subcellular location is the axon. It is found in the dendrite. It localises to the postsynaptic density. The protein localises to the cytoplasm. The protein resides in the cytosol. Its subcellular location is the endoplasmic reticulum. The catalysed reaction is Cu(+)(in) + ATP + H2O = Cu(+)(out) + ADP + phosphate + H(+). Functionally, ATP-driven copper (Cu(+)) ion pump that plays an important role in intracellular copper ion homeostasis. Within a catalytic cycle, acquires Cu(+) ion from donor protein on the cytoplasmic side of the membrane and delivers it to acceptor protein on the lumenal side. The transfer of Cu(+) ion across the membrane is coupled to ATP hydrolysis and is associated with a transient phosphorylation that shifts the pump conformation from inward-facing to outward-facing state. Under physiological conditions, at low cytosolic copper concentration, it is localized at the trans-Golgi network (TGN) where it transfers Cu(+) ions to cuproenzymes of the secretory pathway. Upon elevated cytosolic copper concentrations, it relocalizes to the plasma membrane where it is responsible for the export of excess Cu(+) ions. May play a dual role in neuron function and survival by regulating cooper efflux and neuronal transmission at the synapse as well as by supplying Cu(+) ions to enzymes such as PAM, TYR and SOD3. In the melanosomes of pigmented cells, provides copper cofactor to TYR to form an active TYR holoenzyme for melanin biosynthesis. This Homo sapiens (Human) protein is Copper-transporting ATPase 1.